The sequence spans 556 residues: Adenine deaminase (556 aa).

It belongs to the metallo-dependent hydrolases superfamily. Adenine deaminase family. Mn(2+) is required as a cofactor.

The catalysed reaction is adenine + H2O + H(+) = hypoxanthine + NH4(+). This chain is Adenine deaminase, found in Methanocaldococcus jannaschii (strain ATCC 43067 / DSM 2661 / JAL-1 / JCM 10045 / NBRC 100440) (Methanococcus jannaschii).